Consider the following 187-residue polypeptide: UPF0301 protein ECA3925 (187 aa).

This sequence belongs to the UPF0301 (AlgH) family.

This chain is UPF0301 protein ECA3925, found in Pectobacterium atrosepticum (strain SCRI 1043 / ATCC BAA-672) (Erwinia carotovora subsp. atroseptica).